Reading from the N-terminus, the 623-residue chain is V-type proton ATPase catalytic subunit A (623 aa).

An ATP-binding site is contributed by glycine 252–threonine 259.

This sequence belongs to the ATPase alpha/beta chains family. V-ATPase is a heteromultimeric enzyme composed of a peripheral catalytic V1 complex (main components: subunits A, B, C, D, E, and F) attached to an integral membrane V0 proton pore complex (main component: the proteolipid protein).

The catalysed reaction is ATP + H2O + 4 H(+)(in) = ADP + phosphate + 5 H(+)(out). Functionally, catalytic subunit of the peripheral V1 complex of vacuolar ATPase. V-ATPase vacuolar ATPase is responsible for acidifying a variety of intracellular compartments in eukaryotic cells. The sequence is that of V-type proton ATPase catalytic subunit A (CVA69.24) from Gossypium hirsutum (Upland cotton).